The primary structure comprises 223 residues: uncharacterized protein (223 aa).

Residues 11-71 (EATFESFIDA…YLLEKRQMKK (61 aa)) enclose the HTH tetR-type domain. The H-T-H motif DNA-binding region spans 34–53 (SVEDISRAAGYSKGAFYVHF).

This is an uncharacterized protein from Bacillus subtilis (strain 168).